A 65-amino-acid chain; its full sequence is Large ribosomal subunit protein bL33c (65 aa).

Belongs to the bacterial ribosomal protein bL33 family.

It is found in the plastid. The protein resides in the chloroplast. This chain is Large ribosomal subunit protein bL33c (rpl33), found in Porphyra purpurea (Red seaweed).